A 413-amino-acid polypeptide reads, in one-letter code: L-arginine-specific L-amino acid ligase (413 aa).

One can recognise an ATP-grasp domain in the interval 115–312 (KTKLKMEGIP…LWESSLNISV (198 aa)). 141 to 202 (GEKLGWPIIV…EKCIEMEEFH (62 aa)) lines the ATP pocket. Mg(2+) contacts are provided by Glu268 and Glu281. Mn(2+)-binding residues include Glu268 and Glu281.

In terms of assembly, homodimer. Mg(2+) serves as cofactor. It depends on Mn(2+) as a cofactor. Requires Co(2+) as cofactor.

It carries out the reaction an L-alpha-amino acid + L-arginine + ATP = L-arginyl-L-alpha-amino acid + ADP + phosphate + H(+). Functionally, catalyzes the synthesis of Arg-Xaa dipeptides in an ATP-dependent manner. Has strict specificity toward arginine as the N-terminal substrate. The polypeptide is L-arginine-specific L-amino acid ligase (Bacillus subtilis).